Reading from the N-terminus, the 686-residue chain is MHARLLGLSALLQAAEQSARLYTVAYYFTTGRLLWGWLALAVLLPGFLVQALSYLWFRADGHPGHCSLMMLHLLQLGVWKRHWDAALTSLQKELEAPHRGWLQLQEADLSALRLLEALLQTGPHLLLQTYVFLASDFTDIVPGVSTLFSWSSLSWALVSYTRFMGFMKPGHLAMPWAALFCQQLWRMGMLGTRVLSLVLFYKAYHFWVFVVAGAHWLVMTFWLVAQQSDIIDSTCHWRLFNLLVGAVYILCYLSFWDSPSRNRMVTFYMVMLLENIILLLLATDFLQGASWTSLQTIAGVLSGFLIGSVSLVIYYSLLHPKSTDIWQGCLRKSCGIAGGDKTERRDSPRATDLAGKRTESSGSCQGASYEPTILGKPPTPEQVPPEAGLGTQVAVEDSFLSHHHWLWVKLALKTGNVSKINAAFGDNSPAYCPPAWGLSQQDYLQRKALSAQQELPSSSRDPSTLENSSAFEGVPKAEADPLETSSYVSFASDQQDEAPTQNPAATQGEGTPKEGADAVSGTQGKGTGGQQRGGEGQQSSTLYFSATAEVATSSQQEGSPATLQTAHSGRRLGKSSPAQPASPHPVGLAPFPDTMADISPILGTGPCRGFCPSAGFPGRTLSISELEEPLEPKRELSHHAAVGVWVSLPQLRTAHEPCLTSTPKSESIQTDCSCREQMKQEPSFFI.

Helical transmembrane passes span 33–53, 205–225, 239–259, 265–285, and 297–317; these read LLWG…QALS, HFWV…WLVA, LFNL…WDSP, VTFY…ATDF, and IAGV…YYSL. 3 disordered regions span residues 339–387, 448–468, and 490–592; these read GDKT…PPEA, ALSA…LENS, and FASD…APFP. Residues 340–359 show a composition bias toward basic and acidic residues; that stretch reads DKTERRDSPRATDLAGKRTE. Polar residues-rich tracts occupy residues 450-468 and 490-509; these read SAQQ…LENS and FASD…TQGE. Residues 523–536 show a composition bias toward gly residues; it reads QGKGTGGQQRGGEG. The span at 550–567 shows a compositional bias: polar residues; that stretch reads VATSSQQEGSPATLQTAH.

Belongs to the XK family.

The protein localises to the cell membrane. The polypeptide is XK-related protein 5 (Homo sapiens (Human)).